Reading from the N-terminus, the 282-residue chain is Phosphatidylserine decarboxylase proenzyme (282 aa).

Catalysis depends on charge relay system; for autoendoproteolytic cleavage activity residues aspartate 88, histidine 145, and serine 248. The active-site Schiff-base intermediate with substrate; via pyruvic acid; for decarboxylase activity is the serine 248. Pyruvic acid (Ser); by autocatalysis is present on serine 248.

It belongs to the phosphatidylserine decarboxylase family. PSD-B subfamily. Prokaryotic type I sub-subfamily. As to quaternary structure, heterodimer of a large membrane-associated beta subunit and a small pyruvoyl-containing alpha subunit. Pyruvate is required as a cofactor. Post-translationally, is synthesized initially as an inactive proenzyme. Formation of the active enzyme involves a self-maturation process in which the active site pyruvoyl group is generated from an internal serine residue via an autocatalytic post-translational modification. Two non-identical subunits are generated from the proenzyme in this reaction, and the pyruvate is formed at the N-terminus of the alpha chain, which is derived from the carboxyl end of the proenzyme. The autoendoproteolytic cleavage occurs by a canonical serine protease mechanism, in which the side chain hydroxyl group of the serine supplies its oxygen atom to form the C-terminus of the beta chain, while the remainder of the serine residue undergoes an oxidative deamination to produce ammonia and the pyruvoyl prosthetic group on the alpha chain. During this reaction, the Ser that is part of the protease active site of the proenzyme becomes the pyruvoyl prosthetic group, which constitutes an essential element of the active site of the mature decarboxylase.

It localises to the cell membrane. The enzyme catalyses a 1,2-diacyl-sn-glycero-3-phospho-L-serine + H(+) = a 1,2-diacyl-sn-glycero-3-phosphoethanolamine + CO2. Its pathway is phospholipid metabolism; phosphatidylethanolamine biosynthesis; phosphatidylethanolamine from CDP-diacylglycerol: step 2/2. In terms of biological role, catalyzes the formation of phosphatidylethanolamine (PtdEtn) from phosphatidylserine (PtdSer). The sequence is that of Phosphatidylserine decarboxylase proenzyme from Dechloromonas aromatica (strain RCB).